Consider the following 446-residue polypeptide: Elongation factor Ts, mitochondrial (446 aa).

Residues 1–33 (MSGSRSALSVVRLAACAKPCTLGSTSSVLTRPF) constitute a mitochondrion transit peptide.

It belongs to the EF-Ts family.

The protein localises to the mitochondrion. Associates with the EF-Tu.GDP complex and induces the exchange of GDP to GTP. It remains bound to the aminoacyl-tRNA.EF-Tu.GTP complex up to the GTP hydrolysis stage on the ribosome. This is Elongation factor Ts, mitochondrial from Mycosarcoma maydis (Corn smut fungus).